The sequence spans 112 residues: UPF0342 protein SSU05_1260 (112 aa).

This sequence belongs to the UPF0342 family.

This Streptococcus suis (strain 05ZYH33) protein is UPF0342 protein SSU05_1260.